A 260-amino-acid polypeptide reads, in one-letter code: Putative ABC transporter ATP-binding protein PH0132 (260 aa).

The region spanning 2–234 (IEFRDVWFWY…DLEGFGLKEP (233 aa)) is the ABC transporter domain. An ATP-binding site is contributed by 34–41 (GPNGSGKT).

It belongs to the ABC transporter superfamily.

The protein localises to the cell membrane. In terms of biological role, probably part of an ABC transporter complex. Responsible for energy coupling to the transport system. The polypeptide is Putative ABC transporter ATP-binding protein PH0132 (Pyrococcus horikoshii (strain ATCC 700860 / DSM 12428 / JCM 9974 / NBRC 100139 / OT-3)).